The sequence spans 292 residues: 33 kDa chaperonin (292 aa).

2 disulfide bridges follow: Cys-230-Cys-232 and Cys-263-Cys-266.

Belongs to the HSP33 family. Under oxidizing conditions two disulfide bonds are formed involving the reactive cysteines. Under reducing conditions zinc is bound to the reactive cysteines and the protein is inactive.

The protein localises to the cytoplasm. In terms of biological role, redox regulated molecular chaperone. Protects both thermally unfolding and oxidatively damaged proteins from irreversible aggregation. Plays an important role in the bacterial defense system toward oxidative stress. This Salmonella typhimurium (strain LT2 / SGSC1412 / ATCC 700720) protein is 33 kDa chaperonin.